The primary structure comprises 361 residues: Protein RecA (361 aa).

Position 77 to 84 (77 to 84) interacts with ATP; the sequence is GPESSGKT.

This sequence belongs to the RecA family.

The protein resides in the cytoplasm. Can catalyze the hydrolysis of ATP in the presence of single-stranded DNA, the ATP-dependent uptake of single-stranded DNA by duplex DNA, and the ATP-dependent hybridization of homologous single-stranded DNAs. It interacts with LexA causing its activation and leading to its autocatalytic cleavage. In Rhizobium rhizogenes (strain K84 / ATCC BAA-868) (Agrobacterium radiobacter), this protein is Protein RecA.